Reading from the N-terminus, the 585-residue chain is Arginine--tRNA ligase (585 aa).

Residues 130–140 carry the 'HIGH' region motif; that stretch reads ANPTGPMHVGH.

The protein belongs to the class-I aminoacyl-tRNA synthetase family. Monomer.

The protein resides in the cytoplasm. The catalysed reaction is tRNA(Arg) + L-arginine + ATP = L-arginyl-tRNA(Arg) + AMP + diphosphate. This Methylorubrum extorquens (strain PA1) (Methylobacterium extorquens) protein is Arginine--tRNA ligase.